A 402-amino-acid polypeptide reads, in one-letter code: 2,3-bisphosphoglycerate-independent phosphoglycerate mutase 2 (402 aa).

The protein belongs to the BPG-independent phosphoglycerate mutase family. A-PGAM subfamily.

The catalysed reaction is (2R)-2-phosphoglycerate = (2R)-3-phosphoglycerate. The protein operates within carbohydrate degradation; glycolysis; pyruvate from D-glyceraldehyde 3-phosphate: step 3/5. Functionally, catalyzes the interconversion of 2-phosphoglycerate and 3-phosphoglycerate. The polypeptide is 2,3-bisphosphoglycerate-independent phosphoglycerate mutase 2 (apgM2) (Methanothermobacter thermautotrophicus (strain ATCC 29096 / DSM 1053 / JCM 10044 / NBRC 100330 / Delta H) (Methanobacterium thermoautotrophicum)).